The primary structure comprises 344 residues: Outer membrane protein A (344 aa).

The Periplasmic segment spans residues Met1–Asn14. The chain crosses the membrane as a beta stranded span at residues Thr15 to Trp24. The Extracellular segment spans residues Ser25–Leu49. Residues Gly50–Val59 form a beta stranded membrane-spanning segment. Over Asn60–Tyr62 the chain is Periplasmic. A beta stranded transmembrane segment spans residues Leu63–Trp71. The Extracellular portion of the chain corresponds to Leu72–Gln89. Residues Gly90–Pro100 traverse the membrane as a beta stranded segment. The Periplasmic segment spans residues Ile101–Asp104. A beta stranded transmembrane segment spans residues Leu105–Met114. The Extracellular portion of the chain corresponds to Val115–Ser139. Residues Pro140–Ala149 traverse the membrane as a beta stranded segment. At Val150–Asp153 the chain is on the periplasmic side. Residues Ile154–Trp162 form a beta stranded membrane-spanning segment. Topologically, residues Val163–Gly179 are extracellular. A beta stranded membrane pass occupies residues Met180–Arg188. The Periplasmic segment spans residues Phe189 to Ala344. 4 repeat units span residues Ala199–Pro200, Ala201–Pro202, Ala203–Pro204, and Ala205–Pro206. A 4 X 2 AA tandem repeats of A-P region spans residues Ala199–Pro206. One can recognise an OmpA-like domain in the interval Val208 to Lys336. A disulfide bridge links Cys309 with Cys321.

Belongs to the outer membrane OOP (TC 1.B.6) superfamily. OmpA family. As to quaternary structure, monomer and homodimer.

The protein localises to the cell outer membrane. In terms of biological role, with TolR probably plays a role in maintaining the position of the peptidoglycan cell wall in the periplasm. Acts as a porin with low permeability that allows slow penetration of small solutes; an internal gate slows down solute passage. Functionally, required for conjugation with F-type plasmids; probably serves as the mating receptor on recipient cells. This chain is Outer membrane protein A, found in Klebsiella pneumoniae.